The following is a 327-amino-acid chain: 2-oxoglutarate-dependent dioxygenase traH (327 aa).

A Fe2OG dioxygenase domain is found at 183 to 290; the sequence is TTDAAMFLKL…YAVPAFWHGD (108 aa). Residues His-211, Asp-213, and His-270 each contribute to the Fe cation site. Arg-280 is a binding site for 2-oxoglutarate.

The protein belongs to the iron/ascorbate-dependent oxidoreductase family. Fe(2+) serves as cofactor.

The protein operates within secondary metabolite biosynthesis. 2-oxoglutarate-dependent dioxygenase; part of the tra gene cluster that produces terrestric acid. The clavatol biosynthesis cluster cla and the terrestric acid cluster tra are both involved in the production of peniphenones and penilactones. The non-reducing PKS claF is responsible for the formation of clavatol from successive condensations of 3 malonyl-CoA units, presumably with a simple acetyl-CoA starter unit, and 2 methylation steps. The esterase claE probably collaborates with claF by catalyzing the hydrolysis of ACP-bound acyl intermediates to free the ACP from stalled intermediates. The clavatol oxidase claD then converts clavatol to hydroxyclavatol. Spontaneous dehydration of hydroxyclavatol leads to the accumulation of the highly active ortho-quinone methide. On the other hand, the PKS-NRPS hybrid traA is involved in the formation of crustosic acid, with the help of traB and traD. The polyketide synthase module (PKS) of traA is responsible for the synthesis of the polyketide backbone via the condensation of an acetyl-CoA starter unit with 3 malonyl-CoA units. The downstream nonribosomal peptide synthetase (NRPS) module then amidates the carboxyl end of the polyketide with L-malic acid. Because traA lacks a designated enoylreductase (ER) domain, the required activity is provided the enoyl reductase traG. Crustosic acid undergoes decarboxylation and isomerization to the terrestric acid, catalyzed by the 2-oxoglutarate-dependent dioxygenase traH. Both acids are further converted to the 2 gamma-butyrolactones (R)-5-methyltetronic acid and (S)-5-carboxylmethyltetronic acid, with involvement of the cytochrome P450 monooxygenase claJ. Spontaneous addition of the methide to these gamma-butyrolactones leads to peniphenone D and penilactone D, which undergo again stereospecific attacking by methide to give penilactones A and B. The chain is 2-oxoglutarate-dependent dioxygenase traH from Penicillium crustosum (Blue mold fungus).